A 289-amino-acid chain; its full sequence is MNTAAKMRELLSTKKMVVAPGAHDAMTAKVIGRLGFDAVYMTGYGQSASHLGQPDVGLLTMTEMVARANAIVEAAGVPVIADADTGFGNAVNVMRTVREYEKAGVAVIQLEDQVMPKKCGHMVGREIVSKEEMVGKIKAAVDTRVNPDFMIMARTDARTTKGIDEALERGLAYKEAGADIIFIESPEGEEEMKRINETIPGYTLANMVEGGRTPLLKNAELEALGYNITIYPTASIYVATKAMVDLWTALKNDDTTAGVMDTMVTFSEFNDLMGLEKIREVEHNYATGR.

The protein belongs to the isocitrate lyase/PEP mutase superfamily. Homotetramer. Mg(2+) serves as cofactor.

It catalyses the reaction (2R,3S)-2,3-dimethylmalate = propanoate + pyruvate. It functions in the pathway cofactor degradation; nicotinate degradation; propanoate and pyruvate from 6-hydroxynicotinate: step 8/8. Completely inhibited by propionic anhydride and by cystamine. Irreversibly inhibited by the mercapto reagents iodoacetate and iodoacetamide. Unaffected by hydroxylamine. In terms of biological role, catalyzes the formation of proponate and pyruvate from (2R,3S)-2,3-dimethylmalate. Has no activity toward dimethylmaleate, malate, citramalate, isocitrate and citrate. The sequence is that of 2,3-dimethylmalate lyase from Eubacterium barkeri (Clostridium barkeri).